We begin with the raw amino-acid sequence, 255 residues long: uncharacterized protein (255 aa).

[4Fe-4S] cluster contacts are provided by cysteine 122 and cysteine 160.

Homodimer. [4Fe-4S] cluster is required as a cofactor.

This is an uncharacterized protein from Escherichia coli (strain K12).